We begin with the raw amino-acid sequence, 214 residues long: GTP-binding protein ypt3 (214 aa).

G17–S24 contacts GTP. The short motif at S39–F47 is the Effector region element. At T42 the chain carries Phosphothreonine. GTP-binding positions include D65–Q69 and N123–D126. S-geranylgeranyl cysteine attachment occurs at residues C213 and C214.

Belongs to the small GTPase superfamily. Rab family.

Its subcellular location is the cell membrane. It localises to the endosome membrane. The protein resides in the golgi apparatus membrane. It is found in the cytoplasm. The protein localises to the nucleus. Functionally, has a role in retrograde traffricking of proteins from the endosome to the Golgi. Involved in the secretory pathway where it has a role in acid phosphatase secretion. This Schizosaccharomyces pombe (strain 972 / ATCC 24843) (Fission yeast) protein is GTP-binding protein ypt3 (ypt3).